A 192-amino-acid chain; its full sequence is Akirin-1 (192 aa).

Positions 17-71 (LLSPGSPKRRRCAPLPGPTPGLRPPDAEPPPPFQTQTPPQSLQQPAPPGSERRLP) are disordered. S22 carries the phosphoserine modification. A Nuclear localization signal motif is present at residues 23–28 (PKRRRC). A compositionally biased stretch (pro residues) spans 31–49 (LPGPTPGLRPPDAEPPPPF). Low complexity predominate over residues 50–60 (QTQTPPQSLQQ). T72 is modified (phosphothreonine). The segment covering 104-122 (ASESQPHSSALTAPSSPGS) has biased composition (polar residues). Positions 104–127 (ASESQPHSSALTAPSSPGSSWMKK) are disordered. Residues 189–192 (SYVS) carry the SYVS motif motif.

It belongs to the akirin family. Widely expressed with the highest expression in heart, liver, placenta and peripheral blood leukocytes.

Its subcellular location is the nucleus. Functionally, molecular adapter that acts as a bridge between proteins, and which is involved skeletal muscle development. Functions as a signal transducer for MSTN during skeletal muscle regeneration and myogenesis. May regulate chemotaxis of both macrophages and myoblasts by reorganising actin cytoskeleton, leading to more efficient lamellipodia formation via a PI3 kinase dependent pathway. In contrast to AKIRIN2, not involved in nuclear import of proteasomes. The sequence is that of Akirin-1 from Homo sapiens (Human).